The chain runs to 200 residues: MAFRSAGTLMTEFNAAFVPPALMPGYKGHVPGVASSFGSSYGNTTFKYFQDLRNTGLEKSYALLSGGCFPTIFSPNSPLVLTDNSQNWDRWLHQPTYSRSNQDNGRTTELTNFYKTVQQQRKYYQDKTGILSRVPYFVLPVKEPDRYPLPTDLPPLSEKSKWNLLRLSPDYKRTYQTFPSGKRVSSQERQRRDLYFEFRA.

It belongs to the CIMIP2 family. As to quaternary structure, microtubule inner protein component of sperm flagellar doublet microtubules.

Its subcellular location is the cytoplasm. It localises to the cytoskeleton. The protein resides in the cilium axoneme. The protein localises to the flagellum axoneme. Functionally, microtubule inner protein (MIP) part of the dynein-decorated doublet microtubules (DMTs) in cilia axoneme, which is required for motile cilia beating. Binds to the intra-tubulin interfaces. The chain is Ciliary microtubule inner protein 2C (Cimip2c) from Mus musculus (Mouse).